A 201-amino-acid chain; its full sequence is Probable thymidylate kinase (201 aa).

10–17 (GIDGSGKS) contributes to the ATP binding site.

This sequence belongs to the thymidylate kinase family.

It carries out the reaction dTMP + ATP = dTDP + ADP. This Methanococcoides burtonii (strain DSM 6242 / NBRC 107633 / OCM 468 / ACE-M) protein is Probable thymidylate kinase.